The primary structure comprises 371 residues: Glyco-Gag protein (371 aa).

At 1 to 51 the chain is on the cytoplasmic side; it reads MSGASSGTAIGAHLFGVSPEYRVLIGDEGAGPSKSLSEVSFSVWYRSRAAR. Residues 52–72 form a helical membrane-spanning segment; sequence LVILCLVASFLVPCLTFLIAE. Topologically, residues 73–371 are extracellular; sequence AVMGQTVTTP…NVIDETFPLT (299 aa). Asn-134 carries an N-linked (GlcNAc...) asparagine; by host glycan. Disordered stretches follow at residues 171–281 and 350–371; these read VRPF…NNRP and VPGE…FPLT. Residues 174-193 are compositionally biased toward pro residues; the sequence is FLPPPKPPTPLPQPLSPQPS. Low complexity predominate over residues 194 to 203; sequence APLTSSLYPV. 2 stretches are compositionally biased toward pro residues: residues 204 to 220 and 230 to 245; these read VPKP…PDPS and EPPP…PSGP.

In terms of processing, glycosylated by host. Post-translationally, cleaved by host near the middle of the molecule, releasing the c-terminal half containing capsid and nucleoprotein domains op GAG.

It localises to the host cell membrane. Functionally, plays a role in viral particle release. Presumably acts by facilitating the fission of the virion bud at the cell surface. The protein is Glyco-Gag protein of Feline sarcoma virus (strain Snyder-Theilen).